Consider the following 640-residue polypeptide: G protein-coupled receptor kinase 1 (640 aa).

The segment at 1-201 (MEIENIVANT…LEKRPVDKHT (201 aa)) is N-terminal. The RGS domain maps to 52–187 (YAFVVEKQPI…IQTMYFHRFL (136 aa)). Residues 202-469 (FRLYRVLGKG…AEEIRAHPFF (268 aa)) enclose the Protein kinase domain. Residues 208–216 (LGKGGFGEV) and K231 each bind ATP. D327 serves as the catalytic Proton acceptor. In terms of domain architecture, AGC-kinase C-terminal spans 479–544 (EPVPWKKMEA…GCVSIPWQSE (66 aa)). The tract at residues 610-640 (GVDQQQPSTSAKPAAVRSSRAASASGRTSMI) is disordered. The span at 619–640 (SAKPAAVRSSRAASASGRTSMI) shows a compositional bias: low complexity.

This sequence belongs to the protein kinase superfamily. AGC Ser/Thr protein kinase family. GPRK subfamily.

The catalysed reaction is [G-protein-coupled receptor] + ATP = [G-protein-coupled receptor]-phosphate + ADP + H(+). Functionally, specifically phosphorylates the activated forms of G protein-coupled receptors. The chain is G protein-coupled receptor kinase 1 (grk-1) from Caenorhabditis briggsae.